We begin with the raw amino-acid sequence, 223 residues long: Endonuclease V (223 aa).

Mg(2+) is bound by residues Asp35 and Asp103.

This sequence belongs to the endonuclease V family. The cofactor is Mg(2+).

The protein resides in the cytoplasm. The catalysed reaction is Endonucleolytic cleavage at apurinic or apyrimidinic sites to products with a 5'-phosphate.. Its function is as follows. DNA repair enzyme involved in the repair of deaminated bases. Selectively cleaves double-stranded DNA at the second phosphodiester bond 3' to a deoxyinosine leaving behind the intact lesion on the nicked DNA. In Escherichia coli O45:K1 (strain S88 / ExPEC), this protein is Endonuclease V.